The primary structure comprises 421 residues: D-amino acid dehydrogenase (421 aa).

3–17 (VLVLGGGVVGVASAY) contributes to the FAD binding site.

This sequence belongs to the DadA oxidoreductase family. The cofactor is FAD.

The catalysed reaction is a D-alpha-amino acid + A + H2O = a 2-oxocarboxylate + AH2 + NH4(+). Its pathway is amino-acid degradation; D-alanine degradation; NH(3) and pyruvate from D-alanine: step 1/1. Functionally, oxidative deamination of D-amino acids. This is D-amino acid dehydrogenase from Methylobacterium nodulans (strain LMG 21967 / CNCM I-2342 / ORS 2060).